Reading from the N-terminus, the 684-residue chain is Actin-related protein 5 (684 aa).

A coiled-coil region spans residues 262-469 (KEKSVIIQLP…ARQKQKQKAN (208 aa)). Disordered stretches follow at residues 392–443 (KEKK…PEHY) and 481–500 (VNPT…EDPE). The segment covering 402-443 (SMKDGRLAQKRKRDEEKEKEKEKEEERDRQEEESFLKDPEHY) has biased composition (basic and acidic residues).

The protein belongs to the actin family. ARP5 subfamily. In terms of assembly, component of the chromatin-remodeling Ino80 complex.

The protein resides in the nucleus. Its function is as follows. Proposed core component of the chromatin remodeling Ino80 complex which is involved in transcriptional regulation, DNA replication and probably DNA repair. The polypeptide is Actin-related protein 5 (arpE) (Dictyostelium discoideum (Social amoeba)).